A 115-amino-acid polypeptide reads, in one-letter code: T cell receptor beta variable 7-8 (115 aa).

An N-terminal signal peptide occupies residues 1-21 (MGTRLLCWVVLGFLGTDHTGA). An Ig-like domain is found at 22–115 (GVSQSPRYKV…SAVYLCASSL (94 aa)). A disulfide bridge links cysteine 42 with cysteine 111.

As to quaternary structure, alpha-beta TR is a heterodimer composed of an alpha and beta chain; disulfide-linked. The alpha-beta TR is associated with the transmembrane signaling CD3 coreceptor proteins to form the TR-CD3 (TcR or TCR). The assembly of alpha-beta TR heterodimers with CD3 occurs in the endoplasmic reticulum where a single alpha-beta TR heterodimer associates with one CD3D-CD3E heterodimer, one CD3G-CD3E heterodimer and one CD247 homodimer forming a stable octameric structure. CD3D-CD3E and CD3G-CD3E heterodimers preferentially associate with TR alpha and TR beta chains, respectively. The association of the CD247 homodimer is the last step of TcR assembly in the endoplasmic reticulum and is required for transport to the cell surface.

It localises to the cell membrane. Its function is as follows. V region of the variable domain of T cell receptor (TR) beta chain that participates in the antigen recognition. Alpha-beta T cell receptors are antigen specific receptors which are essential to the immune response and are present on the cell surface of T lymphocytes. Recognize peptide-major histocompatibility (MH) (pMH) complexes that are displayed by antigen presenting cells (APC), a prerequisite for efficient T cell adaptive immunity against pathogens. Binding of alpha-beta TR to pMH complex initiates TR-CD3 clustering on the cell surface and intracellular activation of LCK that phosphorylates the ITAM motifs of CD3G, CD3D, CD3E and CD247 enabling the recruitment of ZAP70. In turn ZAP70 phosphorylates LAT, which recruits numerous signaling molecules to form the LAT signalosome. The LAT signalosome propagates signal branching to three major signaling pathways, the calcium, the mitogen-activated protein kinase (MAPK) kinase and the nuclear factor NF-kappa-B (NF-kB) pathways, leading to the mobilization of transcription factors that are critical for gene expression and essential for T cell growth and differentiation. The T cell repertoire is generated in the thymus, by V-(D)-J rearrangement. This repertoire is then shaped by intrathymic selection events to generate a peripheral T cell pool of self-MH restricted, non-autoaggressive T cells. Post-thymic interaction of alpha-beta TR with the pMH complexes shapes TR structural and functional avidity. The sequence is that of T cell receptor beta variable 7-8 from Homo sapiens (Human).